A 194-amino-acid polypeptide reads, in one-letter code: FMN-dependent NADH:quinone oxidoreductase (194 aa).

FMN-binding positions include Ser-9, 15–17 (SIS), and 85–88 (MYNF).

Belongs to the azoreductase type 1 family. As to quaternary structure, homodimer. Requires FMN as cofactor.

The catalysed reaction is 2 a quinone + NADH + H(+) = 2 a 1,4-benzosemiquinone + NAD(+). The enzyme catalyses N,N-dimethyl-1,4-phenylenediamine + anthranilate + 2 NAD(+) = 2-(4-dimethylaminophenyl)diazenylbenzoate + 2 NADH + 2 H(+). Functionally, quinone reductase that provides resistance to thiol-specific stress caused by electrophilic quinones. In terms of biological role, also exhibits azoreductase activity. Catalyzes the reductive cleavage of the azo bond in aromatic azo compounds to the corresponding amines. The polypeptide is FMN-dependent NADH:quinone oxidoreductase (Xanthomonas oryzae pv. oryzae (strain MAFF 311018)).